We begin with the raw amino-acid sequence, 159 residues long: Fatty acid-binding protein homolog 1 (159 aa).

Residues 1 to 17 (MCAKIALLLVLVGAASA) form the signal peptide.

It belongs to the calycin superfamily. Fatty-acid binding protein (FABP) family. In terms of tissue distribution, first detected in hypodermal precursor cells at the time of gastrulation. From the two-fold stage through to three-fold stages, expression is localized exclusively to hyp-7 but disappears in newly hatched L1s and subsequent developmental stages. Expression from L1 to adult stages is found in a single neuron in the ventral cord with a process into the nerve ring.

It is found in the secreted. Functionally, may play a role in sequestering potentially toxic fatty acids and their peroxidation products, or it may be involved in the maintenance of the impermeable lipid layer of the eggshell. In Caenorhabditis elegans, this protein is Fatty acid-binding protein homolog 1 (lbp-1).